The chain runs to 102 residues: MYKDEMIQLHQFLVYVLKYLENGYDIKDECEEYFSLNISPHHIHRTKAEHKYAIFVLSSAISEILARKEGNNLPPNVVNGLSELARRSRKEVVKMEARLEAK.

The protein belongs to the UPF0058 family.

The polypeptide is UPF0058 protein MTH_224 (Methanothermobacter thermautotrophicus (strain ATCC 29096 / DSM 1053 / JCM 10044 / NBRC 100330 / Delta H) (Methanobacterium thermoautotrophicum)).